We begin with the raw amino-acid sequence, 360 residues long: UDP-N-acetylglucosamine--N-acetylmuramyl-(pentapeptide) pyrophosphoryl-undecaprenol N-acetylglucosamine transferase (360 aa).

Residues Ser198 and Gln289 each contribute to the UDP-N-acetyl-alpha-D-glucosamine site.

The protein belongs to the glycosyltransferase 28 family. MurG subfamily.

The protein resides in the cell membrane. It carries out the reaction Mur2Ac(oyl-L-Ala-gamma-D-Glu-L-Lys-D-Ala-D-Ala)-di-trans,octa-cis-undecaprenyl diphosphate + UDP-N-acetyl-alpha-D-glucosamine = beta-D-GlcNAc-(1-&gt;4)-Mur2Ac(oyl-L-Ala-gamma-D-Glu-L-Lys-D-Ala-D-Ala)-di-trans,octa-cis-undecaprenyl diphosphate + UDP + H(+). Its pathway is cell wall biogenesis; peptidoglycan biosynthesis. In terms of biological role, cell wall formation. Catalyzes the transfer of a GlcNAc subunit on undecaprenyl-pyrophosphoryl-MurNAc-pentapeptide (lipid intermediate I) to form undecaprenyl-pyrophosphoryl-MurNAc-(pentapeptide)GlcNAc (lipid intermediate II). The sequence is that of UDP-N-acetylglucosamine--N-acetylmuramyl-(pentapeptide) pyrophosphoryl-undecaprenol N-acetylglucosamine transferase from Streptococcus pyogenes serotype M5 (strain Manfredo).